Consider the following 670-residue polypeptide: Tripeptidyl-peptidase SED1 (670 aa).

The signal sequence occupies residues 1 to 20 (MSTMIFMYFIYIVLYASGIA). Positions 21–231 (ANLSYHVHEK…VGLLKNKILS (211 aa)) are cleaved as a propeptide — removed in mature form. In terms of domain architecture, Peptidase S53 spans 241–669 (LITPDCLRAL…DRMLDLFLQL (429 aa)). Catalysis depends on charge relay system residues E318 and D322. N334, N387, N488, N508, and N551 each carry an N-linked (GlcNAc...) asparagine glycan. S586 functions as the Charge relay system in the catalytic mechanism. Residues D627, V628, G647, and D649 each contribute to the Ca(2+) site.

It depends on Ca(2+) as a cofactor.

Its subcellular location is the secreted. The protein localises to the extracellular space. It catalyses the reaction Release of an N-terminal tripeptide from a polypeptide.. In terms of biological role, secreted tripeptidyl-peptidase which degrades proteins at acidic pHs and is involved in virulence. The chain is Tripeptidyl-peptidase SED1 (SED1) from Arthroderma otae (strain ATCC MYA-4605 / CBS 113480) (Microsporum canis).